The primary structure comprises 118 residues: Putative cytochrome P450 family member 4F30 (118 aa).

Residues 1–64 (MVTPAGCLGG…GPLHILGTDG (64 aa)) are disordered. Residues 28-43 (RAGQTGQAVSGAQVSS) show a composition bias toward polar residues.

The polypeptide is Putative cytochrome P450 family member 4F30 (CYP4F30P) (Homo sapiens (Human)).